We begin with the raw amino-acid sequence, 144 residues long: MELNNLKPAAGAKHAKRRVGRGIGSGLGKTAGRGHKGQKSRSGGFHKVGFEGGQMPLQRRLPKRGFTSLTKEFVGEVRLGDLEKLPVDEIDLLALKQAGLVGELTKSAKIIATGELKRKIVVKGLGATKSARAAIEAAGGSFAE.

The segment at 1–56 (MELNNLKPAAGAKHAKRRVGRGIGSGLGKTAGRGHKGQKSRSGGFHKVGFEGGQMP) is disordered. Positions 21–31 (RGIGSGLGKTA) are enriched in gly residues.

This sequence belongs to the universal ribosomal protein uL15 family. As to quaternary structure, part of the 50S ribosomal subunit.

Binds to the 23S rRNA. In Burkholderia multivorans (strain ATCC 17616 / 249), this protein is Large ribosomal subunit protein uL15.